An 89-amino-acid polypeptide reads, in one-letter code: MGGISIWQLLIIAVIVVLLFGTKKLGSIGSDLGASIKGFKKAMSDDEPKQDKTSQDADFTAKTIADKQADTNQEQAKTEDAKRHDKEQV.

A helical membrane pass occupies residues 1 to 21 (MGGISIWQLLIIAVIVVLLFG). The disordered stretch occupies residues 65–89 (ADKQADTNQEQAKTEDAKRHDKEQV). A compositionally biased stretch (basic and acidic residues) spans 76–89 (AKTEDAKRHDKEQV).

Belongs to the TatA/E family. As to quaternary structure, the Tat system comprises two distinct complexes: a TatABC complex, containing multiple copies of TatA, TatB and TatC subunits, and a separate TatA complex, containing only TatA subunits. Substrates initially bind to the TatABC complex, which probably triggers association of the separate TatA complex to form the active translocon.

It localises to the cell inner membrane. Functionally, part of the twin-arginine translocation (Tat) system that transports large folded proteins containing a characteristic twin-arginine motif in their signal peptide across membranes. TatA could form the protein-conducting channel of the Tat system. This Shigella flexneri protein is Sec-independent protein translocase protein TatA.